The chain runs to 323 residues: ATP synthase gamma chain (323 aa).

A disordered region spans residues 215 to 237; that stretch reads PAGGPAKEQEQGDEGGHGAPSAA. Basic and acidic residues predominate over residues 221 to 230; sequence KEQEQGDEGG.

It belongs to the ATPase gamma chain family. As to quaternary structure, F-type ATPases have 2 components, CF(1) - the catalytic core - and CF(0) - the membrane proton channel. CF(1) has five subunits: alpha(3), beta(3), gamma(1), delta(1), epsilon(1). CF(0) has three main subunits: a, b and c.

It localises to the cell inner membrane. Its function is as follows. Produces ATP from ADP in the presence of a proton gradient across the membrane. The gamma chain is believed to be important in regulating ATPase activity and the flow of protons through the CF(0) complex. In Sorangium cellulosum (strain So ce56) (Polyangium cellulosum (strain So ce56)), this protein is ATP synthase gamma chain.